Reading from the N-terminus, the 53-residue chain is MIVLDTSIIIDYFRGVETTYNLIDEESEIAVTTINCSQIIRGDTFQLQAPLSC.

This is an uncharacterized protein from Archaeoglobus fulgidus (strain ATCC 49558 / DSM 4304 / JCM 9628 / NBRC 100126 / VC-16).